Reading from the N-terminus, the 409-residue chain is Beta-glucanase (409 aa).

The first 31 residues, Met-1–Ala-31, serve as a signal peptide directing secretion. Glu-95 (proton donor) is an active-site residue. Asp-156 functions as the Nucleophile in the catalytic mechanism.

Belongs to the glycosyl hydrolase 8 (cellulase D) family.

It catalyses the reaction Hydrolysis of (1-&gt;4)-beta-D-glucosidic linkages in beta-D-glucans containing (1-&gt;3)- and (1-&gt;4)-bonds.. This is Beta-glucanase (bgc) from Niallia circulans (Bacillus circulans).